The following is a 253-amino-acid chain: Neurotrophin-3 (253 aa).

Positions methionine 1–glycine 18 are cleaved as a signal peptide. A propeptide spanning residues asparagine 19–arginine 134 is cleaved from the precursor. The segment at threonine 62–leucine 89 is disordered. Residue asparagine 127 is glycosylated (N-linked (GlcNAc...) asparagine). Cystine bridges form between cysteine 148/cysteine 213, cysteine 191/cysteine 242, and cysteine 201/cysteine 244.

Belongs to the NGF-beta family.

It is found in the secreted. Functionally, seems to promote the survival of visceral and proprioceptive sensory neurons. In Bos taurus (Bovine), this protein is Neurotrophin-3 (NTF3).